Reading from the N-terminus, the 474-residue chain is Trifunctional enzyme subunit beta, mitochondrial (474 aa).

The transit peptide at M1–R33 directs the protein to the mitochondrion. Position 72 is an N6-acetyllysine; alternate (K72). K72 carries the N6-succinyllysine; alternate modification. C138 acts as the Acyl-thioester intermediate in catalysis. Residues I173 to S220 lie within the membrane without spanning it. An N6-acetyllysine; alternate modification is found at K188. K188 is modified (N6-succinyllysine; alternate). An N6-succinyllysine mark is found at K190, K272, and K291. N6-acetyllysine; alternate is present on K293. Residue K293 is modified to N6-succinyllysine; alternate. K298 is subject to N6-acetyllysine. K332 is modified (N6-acetyllysine; alternate). K332 is modified (N6-succinyllysine; alternate). 2 positions are modified to N6-acetyllysine: K348 and K361. C458 acts as the Proton donor/acceptor in catalysis.

Belongs to the thiolase-like superfamily. Thiolase family. In terms of assembly, heterotetramer of 2 alpha/HADHA and 2 beta/HADHB subunits; forms the mitochondrial trifunctional enzyme. Also purified as higher order heterooligomers including a 4 alpha/HADHA and 4 beta/HADHB heterooligomer which physiological significance remains unclear. The mitochondrial trifunctional enzyme interacts with MTLN. Interacts with RSAD2/viperin.

The protein localises to the mitochondrion. The protein resides in the mitochondrion inner membrane. It localises to the mitochondrion outer membrane. It is found in the endoplasmic reticulum. The enzyme catalyses an acyl-CoA + acetyl-CoA = a 3-oxoacyl-CoA + CoA. It carries out the reaction butanoyl-CoA + acetyl-CoA = 3-oxohexanoyl-CoA + CoA. The catalysed reaction is hexanoyl-CoA + acetyl-CoA = 3-oxooctanoyl-CoA + CoA. It catalyses the reaction octanoyl-CoA + acetyl-CoA = 3-oxodecanoyl-CoA + CoA. The enzyme catalyses decanoyl-CoA + acetyl-CoA = 3-oxododecanoyl-CoA + CoA. It carries out the reaction dodecanoyl-CoA + acetyl-CoA = 3-oxotetradecanoyl-CoA + CoA. The catalysed reaction is tetradecanoyl-CoA + acetyl-CoA = 3-oxohexadecanoyl-CoA + CoA. It functions in the pathway lipid metabolism; fatty acid beta-oxidation. Mitochondrial trifunctional enzyme catalyzes the last three of the four reactions of the mitochondrial beta-oxidation pathway. The mitochondrial beta-oxidation pathway is the major energy-producing process in tissues and is performed through four consecutive reactions breaking down fatty acids into acetyl-CoA. Among the enzymes involved in this pathway, the trifunctional enzyme exhibits specificity for long-chain fatty acids. Mitochondrial trifunctional enzyme is a heterotetrameric complex composed of two proteins, the trifunctional enzyme subunit alpha/HADHA carries the 2,3-enoyl-CoA hydratase and the 3-hydroxyacyl-CoA dehydrogenase activities, while the trifunctional enzyme subunit beta/HADHB described here bears the 3-ketoacyl-CoA thiolase activity. The chain is Trifunctional enzyme subunit beta, mitochondrial (HADHB) from Homo sapiens (Human).